The chain runs to 3401 residues: Genome polyprotein (3401 aa).

Residues 1-104 are Cytoplasmic-facing; the sequence is MPVRPRNKPK…GRKKRRSMTH (104 aa). The propeptide at 101–117 is ER anchor for the capsid protein C, removed in mature form by serine protease NS3; sequence SMTHGIILSLGVTMVIG. The chain crosses the membrane as a helical span at residues 105 to 125; it reads GIILSLGVTMVIGASLHHHGG. At 126 to 240 the chain is on the extracellular side; it reads RYLLNVTHAD…GERQIQRIER (115 aa). Asn-130 and Asn-146 each carry an N-linked (GlcNAc...) asparagine; by host glycan. A helical transmembrane segment spans residues 241–261; that stretch reads WMMRNPFYAAISLLLAWWVGS. Residues 262–266 lie on the Cytoplasmic side of the membrane; the sequence is DIKQK. A helical membrane pass occupies residues 267–281; that stretch reads VLIAFLVLAIGPAYS. Topologically, residues 282 to 725 are extracellular; it reads THCVGIPKRD…HTVFGNVFHS (444 aa). 5 disulfide bridges follow: Cys-284/Cys-311, Cys-355/Cys-386, Cys-373/Cys-397, Cys-462/Cys-564, and Cys-581/Cys-611. A fusion peptide region spans residues 379–392; the sequence is DRGWGNGCGLFGKG. Residues 726–746 traverse the membrane as a helical segment; the sequence is IFGGLSWITKIILGGMFLWLG. Over 747–753 the chain is Extracellular; the sequence is VNSRNQT. The helical transmembrane segment at 754 to 774 threads the bilayer; sequence MCMVLMAVGGILLFMTLGVSG. Residues 775-1122 lie on the Extracellular side of the membrane; that stretch reads EVGCSLDIKR…NVHEEHLVRS (348 aa). 6 disulfides stabilise this stretch: Cys-778-Cys-789, Cys-829-Cys-916, Cys-952-Cys-997, Cys-1054-Cys-1103, Cys-1065-Cys-1087, and Cys-1086-Cys-1090. Asn-904 and Asn-981 each carry an N-linked (GlcNAc...) asparagine; by host glycan. Residues 1123 to 1143 traverse the membrane as a helical segment; that stretch reads WASAGTGMAESSLGLVALFLF. Residues 1144-1198 lie on the Cytoplasmic side of the membrane; sequence TDIFARKRMTRKFMVIGCLGVLSVMIVGGFTALDLIRYIIVVGQHFASMNHGGDV. Residues 1199-1219 traverse the membrane as a helical segment; sequence AYLAIIAVGKLRPGLLMMYSF. Topologically, residues 1220 to 1287 are lumenal; that stretch reads KAAWSPKERV…PILALLTPLS (68 aa). The helical transmembrane segment at 1288-1308 threads the bilayer; the sequence is MEIIRKTGIFACVGLLGLSLW. Residues 1309-1352 lie on the Cytoplasmic side of the membrane; sequence RGGDTTMRKGMPLLAGAATAASGLTRASLSVVFILCATAASRRS. A helical membrane pass occupies residues 1353–1373; sequence WPIGEIMAIVGIVGTGFGMAV. At 1374–1376 the chain is on the lumenal side; sequence NDQ. Residues 1377–1397 form a helical membrane-spanning segment; it reads ASLAGPMLVFGLIMIVYATLG. Residues 1398–1447 are Cytoplasmic-facing; sequence RADGLTLKRVGDITWEEEAVHSGSSTRYDVTLNEAGEFKLVHEEPVVWSH. Residues 1404–1443 form an interacts with and activates NS3 protease region; it reads LKRVGDITWEEEAVHSGSSTRYDVTLNEAGEFKLVHEEPV. Residues 1448 to 1468 constitute an intramembrane region (helical); that stretch reads VVFLVVALIAASVHPIALVVV. Over 1469 to 2154 the chain is Cytoplasmic; it reads TIIWTYGKKH…ASTNAPEAVT (686 aa). Residues 1481–1661 form the Peptidase S7 domain; the sequence is GGVLWDIPIA…GGEGVTEEPL (181 aa). Residues His-1532, Asp-1556, and Ser-1617 each act as charge relay system; for serine protease NS3 activity in the active site. Residues 1665 to 1821 enclose the Helicase ATP-binding domain; that stretch reads ATMLRKGKLT…ESNGEIEDLR (157 aa). The interval 1669–1672 is important for RNA-binding; that stretch reads RKGK. 1678–1685 lines the ATP pocket; it reads YHPGAGKT. A DEAH box motif is present at residues 1769-1772; sequence DEAH. The Helicase C-terminal domain occupies 1816–1995; it reads EIEDLRRDIP…GMVAPLYDVE (180 aa). The chain crosses the membrane as a helical span at residues 2155–2175; it reads ILLMTGIVVACTLGVGLAFMW. Residues 2176–2181 are Lumenal-facing; that stretch reads PKGVDK. Positions 2182–2200 form an intramembrane region, helical; that stretch reads MSMGMITMSIAGYLMLQGG. Leu-2201 is a topological domain (lumenal). A helical membrane pass occupies residues 2202 to 2222; that stretch reads TPVQVASVLLIFFIFMVVLIP. Over 2223-2235 the chain is Cytoplasmic; it reads EAGTQRSINDNKT. Residues 2236–2250 traverse the membrane as a helical segment; that stretch reads LYVLLGVALLIGAIT. Residues 2251 to 2285 lie on the Cytoplasmic side of the membrane; the sequence is ANEMGYLEKTKRDLLGERVQNEWKLELPMFDLRPG. Residues 2286–2306 constitute an intramembrane region (helical); sequence AAWSIYVGLATLVMPVLDHWI. Residues 2307–2354 are Lumenal-facing; sequence RTEYGSLSLTGIAQQASILQAMDKGVPFFKLNMSVIVLLVSVWNNFSM. Residues 2355-2375 traverse the membrane as a helical segment; it reads LSVLCGVGLLGVHCAFVLPGL. The Cytoplasmic segment spans residues 2376–2418; that stretch reads RAQAAKQAQRRVYHGVAKNPVVDGQTTAEIETAPEMPPLYEKK. A helical membrane pass occupies residues 2419-2439; it reads LALVLLGVVAIANGVMVRSAF. Over 2440-2467 the chain is Lumenal; that stretch reads SMAETVVLLSAAVGPLLEGNTSAIWNGP. A helical transmembrane segment spans residues 2468–2488; the sequence is MAVAMAGIMRGNYYAGIGLAY. At 2489–3401 the chain is on the cytoplasmic side; the sequence is NLWILQSPKR…YSVQEVGTVL (913 aa). The mRNA cap 0-1 NS5-type MT domain maps to 2499-2763; the sequence is GRSTTMTLGE…DVVFPTGTRN (265 aa). Ser-2554 is an S-adenosyl-L-methionine binding site. Residue Ser-2554 is modified to Phosphoserine. Lys-2559 functions as the For 2'-O-MTase activity in the catalytic mechanism. Positions 2584, 2585, 2602, 2603, 2629, and 2630 each coordinate S-adenosyl-L-methionine. Asp-2644 serves as the catalytic For 2'-O-MTase activity. Ile-2645 contributes to the S-adenosyl-L-methionine binding site. Residues Lys-2680 and Glu-2716 each act as for 2'-O-MTase activity in the active site. Tyr-2718 provides a ligand contact to S-adenosyl-L-methionine. Positions 2869-2902 match the Nuclear localization signal motif; that stretch reads RAIMEVVNKWMFDFLAREKAPRICTKEEFINKVR. The Zn(2+) site is built by Glu-2936, His-2940, Cys-2945, and Cys-2948. Residues 3026–3178 enclose the RdRp catalytic domain; the sequence is GIMYADDTAG…APLDERFGLA (153 aa). 3 residues coordinate Zn(2+): His-3213, Cys-3229, and Cys-3348.

The protein in the N-terminal section; belongs to the class I-like SAM-binding methyltransferase superfamily. mRNA cap 0-1 NS5-type methyltransferase family. In terms of assembly, homodimer. Interacts (via N-terminus) with host EXOC1 (via C-terminus); this interaction results in EXOC1 degradation through the proteasome degradation pathway. Forms heterodimers with envelope protein E in the endoplasmic reticulum and Golgi. As to quaternary structure, homodimer; in the endoplasmic reticulum and Golgi. Interacts with protein prM. Interacts with non-structural protein 1. In terms of assembly, homodimer; Homohexamer when secreted. Interacts with envelope protein E. NS1 interacts with NS4B. Interacts with host complement protein CFH; this interaction leads to the degradation of C3. Interacts (via N-terminus) with serine protease NS3. As to quaternary structure, forms a heterodimer with serine protease NS3. May form homooligomers. In terms of assembly, forms a heterodimer with NS2B. Interacts with non-structural protein 2A (via N-terminus). Interacts with NS4B. Interacts with unphosphorylated RNA-directed RNA polymerase NS5; this interaction stimulates RNA-directed RNA polymerase NS5 guanylyltransferase activity. NS3 interacts with host PDCD6IP; this interaction contributes to virion release. Interacts with serine protease NS3. As to quaternary structure, homodimer. Interacts with host STAT2; this interaction prevents the establishment of cellular antiviral state. Interacts with serine protease NS3. Interacts with host TRIM23; this interaction leads to NS5 ubiquitination. Specific enzymatic cleavages in vivo yield mature proteins. The nascent capsid protein C contains a C-terminal hydrophobic domain that act as a signal sequence for translocation of prM into the lumen of the ER. Mature capsid protein C is cleaved at a site upstream of this hydrophobic domain by NS3. prM is cleaved in post-Golgi vesicles by a host furin, releasing the mature small envelope protein M, and peptide pr. Non-structural protein 2A-alpha, a C-terminally truncated form of non-structural protein 2A, results from partial cleavage by NS3. Specific enzymatic cleavages in vivo yield mature proteins peptide 2K acts as a signal sequence and is removed from the N-terminus of NS4B by the host signal peptidase in the ER lumen. Signal cleavage at the 2K-4B site requires a prior NS3 protease-mediated cleavage at the 4A-2K site. In terms of processing, cleaved in post-Golgi vesicles by a host furin, releasing the mature small envelope protein M, and peptide pr. This cleavage is incomplete as up to 30% of viral particles still carry uncleaved prM. Post-translationally, N-glycosylated. N-glycosylated. The excreted form is glycosylated and this is required for efficient secretion of the protein from infected cells. In terms of processing, polyubiquitinated; ubiquitination is probably mediated by host TRIM23 and is prerequisite for NS5-STAT2 interaction. NS5 is not ISGylated or sumoylated. Post-translationally, phosphorylated on serines residues. This phosphorylation may trigger NS5 nuclear localization.

The protein localises to the virion. It localises to the host nucleus. The protein resides in the host cytoplasm. Its subcellular location is the host perinuclear region. It is found in the virion membrane. The protein localises to the host endoplasmic reticulum membrane. It localises to the secreted. It carries out the reaction Selective hydrolysis of -Xaa-Xaa-|-Yaa- bonds in which each of the Xaa can be either Arg or Lys and Yaa can be either Ser or Ala.. It catalyses the reaction RNA(n) + a ribonucleoside 5'-triphosphate = RNA(n+1) + diphosphate. The catalysed reaction is a ribonucleoside 5'-triphosphate + H2O = a ribonucleoside 5'-diphosphate + phosphate + H(+). The enzyme catalyses ATP + H2O = ADP + phosphate + H(+). It carries out the reaction a 5'-end (5'-triphosphoguanosine)-ribonucleoside in mRNA + S-adenosyl-L-methionine = a 5'-end (N(7)-methyl 5'-triphosphoguanosine)-ribonucleoside in mRNA + S-adenosyl-L-homocysteine. It catalyses the reaction a 5'-end (N(7)-methyl 5'-triphosphoguanosine)-ribonucleoside in mRNA + S-adenosyl-L-methionine = a 5'-end (N(7)-methyl 5'-triphosphoguanosine)-(2'-O-methyl-ribonucleoside) in mRNA + S-adenosyl-L-homocysteine + H(+). Its function is as follows. Plays a role in virus budding by binding to the cell membrane and gathering the viral RNA into a nucleocapsid that forms the core of a mature virus particle. During virus entry, may induce genome penetration into the host cytoplasm after hemifusion induced by the surface proteins. Can migrate to the cell nucleus where it modulates host functions. In terms of biological role, inhibits RNA silencing by interfering with host Dicer. Prevents premature fusion activity of envelope proteins in trans-Golgi by binding to envelope protein E at pH6.0. After virion release in extracellular space, gets dissociated from E dimers. Functionally, acts as a chaperone for envelope protein E during intracellular virion assembly by masking and inactivating envelope protein E fusion peptide. prM is the only viral peptide matured by host furin in the trans-Golgi network probably to avoid catastrophic activation of the viral fusion activity in acidic Golgi compartment prior to virion release. prM-E cleavage is inefficient, and many virions are only partially matured. These uncleaved prM would play a role in immune evasion. Its function is as follows. May play a role in virus budding. Exerts cytotoxic effects by activating a mitochondrial apoptotic pathway through M ectodomain. May display a viroporin activity. In terms of biological role, binds to host cell surface receptor and mediates fusion between viral and cellular membranes. Envelope protein is synthesized in the endoplasmic reticulum in the form of heterodimer with protein prM. They play a role in virion budding in the ER, and the newly formed immature particle is covered with 60 spikes composed of heterodimer between precursor prM and envelope protein E. The virion is transported to the Golgi apparatus where the low pH causes dissociation of PrM-E heterodimers and formation of E homodimers. prM-E cleavage is inefficient, and many virions are only partially matured. These uncleaved prM would play a role in immune evasion. Involved in immune evasion, pathogenesis and viral replication. Once cleaved off the polyprotein, is targeted to three destinations: the viral replication cycle, the plasma membrane and the extracellular compartment. Essential for viral replication. Required for formation of the replication complex and recruitment of other non-structural proteins to the ER-derived membrane structures. Excreted as a hexameric lipoparticle that plays a role against host immune response. Antagonizing the complement function. Binds to the host macrophages and dendritic cells. Inhibits signal transduction originating from Toll-like receptor 3 (TLR3). Functionally, component of the viral RNA replication complex that functions in virion assembly and antagonizes the host immune response. Its function is as follows. Required cofactor for the serine protease function of NS3. May have membrane-destabilizing activity and form viroporins. In terms of biological role, displays three enzymatic activities: serine protease, NTPase and RNA helicase. NS3 serine protease, in association with NS2B, performs its autocleavage and cleaves the polyprotein at dibasic sites in the cytoplasm: C-prM, NS2A-NS2B, NS2B-NS3, NS3-NS4A, NS4A-2K and NS4B-NS5. NS3 RNA helicase binds RNA and unwinds dsRNA in the 3' to 5' direction. Also plays a role in virus assembly. Regulates the ATPase activity of the NS3 helicase activity. NS4A allows NS3 helicase to conserve energy during unwinding. Functionally, functions as a signal peptide for NS4B and is required for the interferon antagonism activity of the latter. Its function is as follows. Induces the formation of ER-derived membrane vesicles where the viral replication takes place. Inhibits interferon (IFN)-induced host STAT1 phosphorylation and nuclear translocation, thereby preventing the establishment of cellular antiviral state by blocking the IFN-alpha/beta pathway. In terms of biological role, replicates the viral (+) and (-) RNA genome, and performs the capping of genomes in the cytoplasm. NS5 methylates viral RNA cap at guanine N-7 and ribose 2'-O positions. Besides its role in RNA genome replication, also prevents the establishment of cellular antiviral state by blocking the interferon-alpha/beta (IFN-alpha/beta) signaling pathway. IFN-I induces binding of NS5 to host IFN-activated transcription factor STAT2, preventing its transcriptional activity. Host TRIM23 is the E3 ligase that interacts with and polyubiquitinates NS5 to promote its binding to STAT2 and trigger IFN-I signaling inhibition. This is Genome polyprotein from Edge Hill virus (EHV).